Here is a 382-residue protein sequence, read N- to C-terminus: D-galactonate dehydratase (382 aa).

D183 is a Mg(2+) binding site. Residue H185 is the Proton donor of the active site. Residues E209 and E235 each contribute to the Mg(2+) site. H285 functions as the Proton acceptor in the catalytic mechanism.

It belongs to the mandelate racemase/muconate lactonizing enzyme family. GalD subfamily. It depends on Mg(2+) as a cofactor.

It carries out the reaction D-galactonate = 2-dehydro-3-deoxy-D-galactonate + H2O. Its pathway is carbohydrate acid metabolism; D-galactonate degradation; D-glyceraldehyde 3-phosphate and pyruvate from D-galactonate: step 1/3. Its function is as follows. Catalyzes the dehydration of D-galactonate to 2-keto-3-deoxy-D-galactonate. This chain is D-galactonate dehydratase, found in Klebsiella pneumoniae (strain 342).